The following is a 453-amino-acid chain: Ribosomal protein uS12 methylthiotransferase RimO (453 aa).

In terms of domain architecture, MTTase N-terminal spans 5–120 (PKVGFVSLGC…VMQAVHSHLP (116 aa)). [4Fe-4S] cluster is bound by residues Cys14, Cys50, Cys79, Cys151, Cys155, and Cys158. The 246-residue stretch at 137 to 382 (LTPRHYAYLK…MEVAEEVSAR (246 aa)) folds into the Radical SAM core domain. In terms of domain architecture, TRAM spans 385–453 (ARKVGKTLKV…ADGHDLWGEV (69 aa)).

Belongs to the methylthiotransferase family. RimO subfamily. Requires [4Fe-4S] cluster as cofactor.

It localises to the cytoplasm. It carries out the reaction L-aspartate(89)-[ribosomal protein uS12]-hydrogen + (sulfur carrier)-SH + AH2 + 2 S-adenosyl-L-methionine = 3-methylsulfanyl-L-aspartate(89)-[ribosomal protein uS12]-hydrogen + (sulfur carrier)-H + 5'-deoxyadenosine + L-methionine + A + S-adenosyl-L-homocysteine + 2 H(+). In terms of biological role, catalyzes the methylthiolation of an aspartic acid residue of ribosomal protein uS12. In Burkholderia multivorans (strain ATCC 17616 / 249), this protein is Ribosomal protein uS12 methylthiotransferase RimO.